The primary structure comprises 156 residues: ATP synthase subunit b (156 aa).

Residues 7 to 29 (LFGQTVAFILFVWFCMKFVWPPL) form a helical membrane-spanning segment.

This sequence belongs to the ATPase B chain family. In terms of assembly, F-type ATPases have 2 components, F(1) - the catalytic core - and F(0) - the membrane proton channel. F(1) has five subunits: alpha(3), beta(3), gamma(1), delta(1), epsilon(1). F(0) has three main subunits: a(1), b(2) and c(10-14). The alpha and beta chains form an alternating ring which encloses part of the gamma chain. F(1) is attached to F(0) by a central stalk formed by the gamma and epsilon chains, while a peripheral stalk is formed by the delta and b chains.

It localises to the cell inner membrane. Functionally, f(1)F(0) ATP synthase produces ATP from ADP in the presence of a proton or sodium gradient. F-type ATPases consist of two structural domains, F(1) containing the extramembraneous catalytic core and F(0) containing the membrane proton channel, linked together by a central stalk and a peripheral stalk. During catalysis, ATP synthesis in the catalytic domain of F(1) is coupled via a rotary mechanism of the central stalk subunits to proton translocation. Component of the F(0) channel, it forms part of the peripheral stalk, linking F(1) to F(0). This is ATP synthase subunit b from Shewanella frigidimarina (strain NCIMB 400).